The chain runs to 279 residues: uncharacterized protein (279 aa).

The span at 1–29 (MSSRYTSSYTPSSRYGSGWDYSSSYSSSR) shows a compositional bias: low complexity. 2 disordered regions span residues 1–111 (MSSR…APRE) and 137–233 (LTLA…AEAL). Residues 30 to 44 (TSRDRDTGSYRDRDY) are compositionally biased toward basic and acidic residues. Over residues 45 to 59 (SSTSYTSTRPRYSTY) the composition is skewed to low complexity. The span at 142–153 (EPEESEEEEDDE) shows a compositional bias: acidic residues. Over residues 170 to 186 (ESSPVSSPVKEVSSAAS) the composition is skewed to low complexity. The span at 189 to 205 (ANDNGNETENRTPSPTV) shows a compositional bias: polar residues. Basic and acidic residues predominate over residues 221–233 (SDVKKEGGDAEAL).

This is an uncharacterized protein from Caenorhabditis elegans.